Reading from the N-terminus, the 439-residue chain is GTPase Der (439 aa).

EngA-type G domains lie at 4-169 and 177-352; these read AMVS…PQEE and IKIA…EEYN. Residues 10 to 17, 57 to 61, 120 to 123, 183 to 190, 230 to 234, and 295 to 298 contribute to the GTP site; these read GRPNVGKS, DTGGL, NKVD, GKPNVGKS, DTAGI, and NKWD. The 85-residue stretch at 353 to 437 folds into the KH-like domain; it reads KRITTGLLNN…PIVISTKKRG (85 aa).

It belongs to the TRAFAC class TrmE-Era-EngA-EngB-Septin-like GTPase superfamily. EngA (Der) GTPase family. As to quaternary structure, associates with the 50S ribosomal subunit.

Functionally, GTPase that plays an essential role in the late steps of ribosome biogenesis. In Thermoanaerobacter sp. (strain X514), this protein is GTPase Der.